A 354-amino-acid chain; its full sequence is Fructose-bisphosphate aldolase (354 aa).

D-glyceraldehyde 3-phosphate is bound at residue Ser50. The active-site Proton donor is Asp83. His84, Asp105, Glu142, and His198 together coordinate Zn(2+). Gly199 is a dihydroxyacetone phosphate binding site. His232 is a Zn(2+) binding site. Dihydroxyacetone phosphate is bound by residues 233–235 (GSS) and 275–278 (NIDT).

It belongs to the class II fructose-bisphosphate aldolase family. It depends on Zn(2+) as a cofactor.

The enzyme catalyses beta-D-fructose 1,6-bisphosphate = D-glyceraldehyde 3-phosphate + dihydroxyacetone phosphate. It participates in carbohydrate degradation; glycolysis; D-glyceraldehyde 3-phosphate and glycerone phosphate from D-glucose: step 4/4. Catalyzes the aldol condensation of dihydroxyacetone phosphate (DHAP or glycerone-phosphate) with glyceraldehyde 3-phosphate (G3P) to form fructose 1,6-bisphosphate (FBP) in gluconeogenesis and the reverse reaction in glycolysis. The sequence is that of Fructose-bisphosphate aldolase (fba) from Pseudomonas aeruginosa (strain ATCC 15692 / DSM 22644 / CIP 104116 / JCM 14847 / LMG 12228 / 1C / PRS 101 / PAO1).